Reading from the N-terminus, the 223-residue chain is Endonuclease V (223 aa).

D35 and D103 together coordinate Mg(2+).

Belongs to the endonuclease V family. It depends on Mg(2+) as a cofactor.

The protein resides in the cytoplasm. The catalysed reaction is Endonucleolytic cleavage at apurinic or apyrimidinic sites to products with a 5'-phosphate.. Its function is as follows. DNA repair enzyme involved in the repair of deaminated bases. Selectively cleaves double-stranded DNA at the second phosphodiester bond 3' to a deoxyinosine leaving behind the intact lesion on the nicked DNA. The chain is Endonuclease V from Escherichia coli O139:H28 (strain E24377A / ETEC).